Here is a 207-residue protein sequence, read N- to C-terminus: Shikimate kinase (207 aa).

32–37 serves as a coordination point for ATP; it reads GVGKST. Ser-36 serves as a coordination point for Mg(2+). Substrate contacts are provided by Asp-54, Arg-78, and Gly-100. An ATP-binding site is contributed by Arg-138. Arg-157 lines the substrate pocket.

It belongs to the shikimate kinase family. As to quaternary structure, monomer. Mg(2+) serves as cofactor.

Its subcellular location is the cytoplasm. The enzyme catalyses shikimate + ATP = 3-phosphoshikimate + ADP + H(+). It participates in metabolic intermediate biosynthesis; chorismate biosynthesis; chorismate from D-erythrose 4-phosphate and phosphoenolpyruvate: step 5/7. Its function is as follows. Catalyzes the specific phosphorylation of the 3-hydroxyl group of shikimic acid using ATP as a cosubstrate. In Bradyrhizobium diazoefficiens (strain JCM 10833 / BCRC 13528 / IAM 13628 / NBRC 14792 / USDA 110), this protein is Shikimate kinase.